The chain runs to 352 residues: Quinolinate synthase (352 aa).

Residues histidine 48 and serine 69 each coordinate iminosuccinate. A [4Fe-4S] cluster-binding site is contributed by cysteine 114. Iminosuccinate is bound by residues 140–142 (YAN) and serine 157. Residue cysteine 201 participates in [4Fe-4S] cluster binding. Iminosuccinate is bound by residues 227–229 (HPE) and threonine 244. Cysteine 298 provides a ligand contact to [4Fe-4S] cluster.

Belongs to the quinolinate synthase family. Type 1 subfamily. Requires [4Fe-4S] cluster as cofactor.

The protein resides in the cytoplasm. The enzyme catalyses iminosuccinate + dihydroxyacetone phosphate = quinolinate + phosphate + 2 H2O + H(+). It functions in the pathway cofactor biosynthesis; NAD(+) biosynthesis; quinolinate from iminoaspartate: step 1/1. Its function is as follows. Catalyzes the condensation of iminoaspartate with dihydroxyacetone phosphate to form quinolinate. In Pseudomonas putida (strain ATCC 700007 / DSM 6899 / JCM 31910 / BCRC 17059 / LMG 24140 / F1), this protein is Quinolinate synthase.